A 225-amino-acid chain; its full sequence is tRNA (guanine-N(7)-)-methyltransferase (225 aa).

The S-adenosyl-L-methionine site is built by E56, E81, D108, and D131. The active site involves D131. Residues K135, D167, and 204–207 (TKFE) each bind substrate.

This sequence belongs to the class I-like SAM-binding methyltransferase superfamily. TrmB family.

The catalysed reaction is guanosine(46) in tRNA + S-adenosyl-L-methionine = N(7)-methylguanosine(46) in tRNA + S-adenosyl-L-homocysteine. The protein operates within tRNA modification; N(7)-methylguanine-tRNA biosynthesis. Functionally, catalyzes the formation of N(7)-methylguanine at position 46 (m7G46) in tRNA. This is tRNA (guanine-N(7)-)-methyltransferase from Legionella pneumophila (strain Corby).